A 336-amino-acid chain; its full sequence is MTTNRKDEHILYALEQKSSYNSFDEVELIHSSLPLYNLDEIDLSTEFAGRKWDFPFYINAMTGGSNKGREINQKLAQVAESCGILFVTGSYSAALKNPTDDSFSVKSSHPNLLLGTNIGLDKPVELGLQTVEEMNPVLLQVHVNVMQELLMPEGERKFRSWQSHLADYSKQIPVPIVLKEVGFGMDAKTIERAYEFGVRTVDLSGRGGTSFAYIENRRSGQRDYLNQWGQSTMQALLNAQEWKDKVELLVSGGVRNPLDMIKCLVFGAKAVGLSRTVLELVETYTVEEVIGIVQGWKADLRLIMCSLNCATIADLQKVDYLLYGKLKEAKDQMKKA.

5–6 (RK) lines the substrate pocket. FMN-binding positions include 60–62 (AMT), S90, and N117. Residue Q147 participates in substrate binding. E148 serves as a coordination point for Mg(2+). Residues K179, S204, T209, 253–255 (GVR), and 274–275 (SR) contribute to the FMN site.

The protein belongs to the IPP isomerase type 2 family. As to quaternary structure, homooctamer. Dimer of tetramers. The cofactor is FMN. Requires NADPH as cofactor. Mg(2+) serves as cofactor.

It localises to the cytoplasm. It catalyses the reaction isopentenyl diphosphate = dimethylallyl diphosphate. Its function is as follows. Involved in the biosynthesis of isoprenoids. Catalyzes the 1,3-allylic rearrangement of the homoallylic substrate isopentenyl (IPP) to its allylic isomer, dimethylallyl diphosphate (DMAPP). This chain is Isopentenyl-diphosphate delta-isomerase, found in Streptococcus pneumoniae serotype 4 (strain ATCC BAA-334 / TIGR4).